Consider the following 149-residue polypeptide: Calmodulin (149 aa).

Alanine 2 carries the post-translational modification N-acetylalanine. 4 EF-hand domains span residues 8-43, 44-79, 81-116, and 117-149; these read EQIA…LGQN, PTEA…KMKD, DSEE…LGEK, and LTDE…MMAK. Residues aspartate 21, aspartate 23, aspartate 25, threonine 27, glutamate 32, aspartate 57, aspartate 59, asparagine 61, threonine 63, glutamate 68, aspartate 94, aspartate 96, asparagine 98, and glutamate 105 each coordinate Ca(2+). An N6,N6,N6-trimethyllysine modification is found at lysine 116. Ca(2+)-binding residues include aspartate 130, aspartate 132, aspartate 134, glutamine 136, and glutamate 141.

It belongs to the calmodulin family.

Its function is as follows. Calmodulin mediates the control of a large number of enzymes, ion channels and other proteins by Ca(2+). Among the enzymes to be stimulated by the calmodulin-Ca(2+) complex are a number of protein kinases and phosphatases. The protein is Calmodulin of Macrocystis pyrifera (Giant kelp).